Reading from the N-terminus, the 219-residue chain is uncharacterized protein (219 aa).

Belongs to the CIA30 family.

The protein localises to the cytoplasm. The protein resides in the nucleus. This is an uncharacterized protein from Schizosaccharomyces pombe (strain 972 / ATCC 24843) (Fission yeast).